We begin with the raw amino-acid sequence, 167 residues long: Endoribonuclease YbeY (167 aa).

3 residues coordinate Zn(2+): histidine 131, histidine 135, and histidine 141.

This sequence belongs to the endoribonuclease YbeY family. The cofactor is Zn(2+).

It is found in the cytoplasm. Functionally, single strand-specific metallo-endoribonuclease involved in late-stage 70S ribosome quality control and in maturation of the 3' terminus of the 16S rRNA. This Rickettsia akari (strain Hartford) protein is Endoribonuclease YbeY.